Reading from the N-terminus, the 218-residue chain is MANVTLNVTDNNGKEAGTLEAPEALFGFTAEEVQAHVPLIHQVVVAQRAAARQGTHAVKNRGAVSGGGRKPWKQKGTGRARQGSIRAPQWYHGGVAHGPVPRDYSQRTPKKMKAAALRYALSDRANNGRVAVVDFQLDAPSTKKAIAALAPVVADNFTTVVLSRDNVNEWLSVRNIPTVYPIFADQLNTYDVITAQYVVFSKDGLEAFVAAKTAAKEA.

A disordered region spans residues glycine 54 to glutamine 106.

Belongs to the universal ribosomal protein uL4 family. Part of the 50S ribosomal subunit.

Functionally, one of the primary rRNA binding proteins, this protein initially binds near the 5'-end of the 23S rRNA. It is important during the early stages of 50S assembly. It makes multiple contacts with different domains of the 23S rRNA in the assembled 50S subunit and ribosome. Forms part of the polypeptide exit tunnel. This is Large ribosomal subunit protein uL4 from Bifidobacterium animalis subsp. lactis (strain AD011).